The sequence spans 763 residues: MSELLSFALFLASVLIYAWKAGRNTWWFAATLTVLGLFVVLNITLFASDYFTGDGINDAVLYTLTNSLTGAGVSKYILPGIGIVLGLTAVFGALGWILRRRRHHPHHFGYSLLALLLALGSVDASPAFRQITELVKSQSRDGDPDFAAYYKEPSKTIPDPKLNLVYIYGESLERTYFDNEAFPDLTPELGALKNEGLDFSHTQQLPGTDYTIAGMVASQCGIPLFAPFEGNASASVSSFFPQNICLGDILKNSGYQNYFVQGANLRFAGKDVFLKSHGFDHLYGSEELKSVVADPHYRNDWGFYDDTVLDEAWKKFEELSRSSQRFSLFTLTVDTHHPDGFISRTCNRKKYDFDGKPNQSFSAVSCSQENIAAFINKIKASPWFKDTVIVVSSDHLAMNNTAWKYLNKQDRNNLFFVIRGDKPQQETLAVKRNTMDNGATVLDILGGDNYLGLGRSSLSGQSMSEIFLNIKEKTLAWKPDIIRLWKFPKEMKEFTIDQQKNMIAFSGSHFRLPLLLRVSDKRVEPLPESEYSAPLRFQLADFAPRDNFVWVDRCYKMAQLWAPELALSTDWCVSQGQLGGQQIVQHVDKTTWQGKTAFKDTVIDMARYKGNVDTLKIVDNDIRYKADSFIFNVAGAPEEVKQFSGISRPESWGRWSNAQLGDEVKIEYKHPLPKKFDLVITAKAYGNNASRPIPVRVGNEEQTLVLGNEVTTTTLHFDNPTDADTLVIVPPEPVSTNEGNILGHSPRKLGIGMVEIKVVEREG.

4 helical membrane-spanning segments follow: residues 1-21 (MSEL…AWKA), 26-46 (WWFA…ITLF), 77-97 (ILPG…LGWI), and 108-128 (FGYS…SPAF).

This sequence belongs to the OpgB family.

It localises to the cell inner membrane. It catalyses the reaction a phosphatidylglycerol + a membrane-derived-oligosaccharide D-glucose = a 1,2-diacyl-sn-glycerol + a membrane-derived-oligosaccharide 6-(glycerophospho)-D-glucose.. Its pathway is glycan metabolism; osmoregulated periplasmic glucan (OPG) biosynthesis. Functionally, transfers a phosphoglycerol residue from phosphatidylglycerol to the membrane-bound nascent glucan backbones. The polypeptide is Phosphoglycerol transferase I (Escherichia coli (strain 55989 / EAEC)).